The following is a 116-amino-acid chain: Fluoride-specific ion channel FluC 2 (116 aa).

2 consecutive transmembrane segments (helical) span residues 3–23 (LLTA…RYAV) and 43–63 (LLFG…AVTV). Residues Gly67 and Thr70 each coordinate Na(+). The chain crosses the membrane as a helical span at residues 96-116 (VGTLAAALLAVFLGIALGAAL).

Belongs to the fluoride channel Fluc/FEX (TC 1.A.43) family.

It localises to the cell membrane. It carries out the reaction fluoride(in) = fluoride(out). Na(+) is not transported, but it plays an essential structural role and its presence is essential for fluoride channel function. In terms of biological role, fluoride-specific ion channel. Important for reducing fluoride concentration in the cell, thus reducing its toxicity. The polypeptide is Fluoride-specific ion channel FluC 2 (Natronomonas pharaonis (strain ATCC 35678 / DSM 2160 / CIP 103997 / JCM 8858 / NBRC 14720 / NCIMB 2260 / Gabara) (Halobacterium pharaonis)).